The sequence spans 294 residues: 4-hydroxy-tetrahydrodipicolinate synthase (294 aa).

Thr45 lines the pyruvate pocket. Catalysis depends on Tyr133, which acts as the Proton donor/acceptor. The active-site Schiff-base intermediate with substrate is the Lys162. Residue Ile204 coordinates pyruvate.

Belongs to the DapA family. As to quaternary structure, homotetramer; dimer of dimers.

The protein localises to the cytoplasm. The enzyme catalyses L-aspartate 4-semialdehyde + pyruvate = (2S,4S)-4-hydroxy-2,3,4,5-tetrahydrodipicolinate + H2O + H(+). Its pathway is amino-acid biosynthesis; L-lysine biosynthesis via DAP pathway; (S)-tetrahydrodipicolinate from L-aspartate: step 3/4. Functionally, catalyzes the condensation of (S)-aspartate-beta-semialdehyde [(S)-ASA] and pyruvate to 4-hydroxy-tetrahydrodipicolinate (HTPA). The protein is 4-hydroxy-tetrahydrodipicolinate synthase of Bartonella tribocorum (strain CIP 105476 / IBS 506).